The following is a 203-amino-acid chain: Regulator of free ubiquitin chains 1 (203 aa).

The protein belongs to the RFU1 family.

Its subcellular location is the endosome. Its function is as follows. Inhibitor of the DOA4 deubiquitinase involved in the regulation of protein degradation by the proteasome and maintenance of a normal level of free ubiquitin. This Candida glabrata (strain ATCC 2001 / BCRC 20586 / JCM 3761 / NBRC 0622 / NRRL Y-65 / CBS 138) (Yeast) protein is Regulator of free ubiquitin chains 1 (RFU1).